The following is a 190-amino-acid chain: Segregation and condensation protein B (190 aa).

This sequence belongs to the ScpB family. As to quaternary structure, homodimer. Homodimerization may be required to stabilize the binding of ScpA to the Smc head domains. Component of a cohesin-like complex composed of ScpA, ScpB and the Smc homodimer, in which ScpA and ScpB bind to the head domain of Smc. The presence of the three proteins is required for the association of the complex with DNA.

The protein localises to the cytoplasm. In terms of biological role, participates in chromosomal partition during cell division. May act via the formation of a condensin-like complex containing Smc and ScpA that pull DNA away from mid-cell into both cell halves. The protein is Segregation and condensation protein B of Ruminiclostridium cellulolyticum (strain ATCC 35319 / DSM 5812 / JCM 6584 / H10) (Clostridium cellulolyticum).